The sequence spans 63 residues: DNA-directed RNA polymerase 7 kDa subunit (63 aa).

It belongs to the poxviridae DNA-directed RNA polymerase 7 kDa subunit family. In terms of assembly, the DNA-dependent RNA polymerase (vRNAP) consists of eight subunits encoded by early viral genes and termed according to their apparent molecular masses Rpo147, Rpo132, Rpo35, Rpo30, Rpo22, Rpo19, Rpo18, and Rpo7. The same holoenzyme, with the addition of the transcription-specificity factor RAP94, is used for early gene expression.

It localises to the virion. The enzyme catalyses RNA(n) + a ribonucleoside 5'-triphosphate = RNA(n+1) + diphosphate. In terms of biological role, part of the DNA-dependent RNA polymerase which catalyzes the transcription of viral DNA into RNA using the four ribonucleoside triphosphates as substrates. Responsible for the transcription of early, intermediate and late genes. DNA-dependent RNA polymerase associates with the early transcription factor (ETF), itself composed of OPG118 and OPG134, thereby allowing the early genes transcription. Late transcription, and probably also intermediate transcription, require newly synthesized RNA polymerase. The polypeptide is DNA-directed RNA polymerase 7 kDa subunit (OPG090) (Monkeypox virus).